The following is a 329-amino-acid chain: Ephrin-B1 (329 aa).

An N-terminal signal peptide occupies residues 1-20 (MEGLRRLLGLLLVLYRLCSA). The Extracellular segment spans residues 21 to 226 (LGKNLEPVTW…FFNSKIAVFA (206 aa)). The 135-residue stretch at 23-157 (KNLEPVTWNS…TRSMKIIMKV (135 aa)) folds into the Ephrin RBD domain. Disulfide bonds link C57-C94 and C82-C146. The N-linked (GlcNAc...) asparagine glycan is linked to N132. A disordered region spans residues 163–192 (AVPPEQLTTTRPSKEADNTGKIATFGPWNG). N203 carries N-linked (GlcNAc...) asparagine glycosylation. The helical transmembrane segment at 227-247 (AIGAGCVIFILIIIFLVVLLI) threads the bilayer. At 248 to 329 (KIRKRHRKHT…QSPANIYYKV (82 aa)) the chain is on the cytoplasmic side. The PDZ-binding motif lies at 327–329 (YKV).

The protein belongs to the ephrin family. In terms of assembly, interacts with TLE4 through the PDZ-binding motif. Inducible phosphorylation of tyrosine residues in the cytoplasmic domain. Tyrosine phosphorylation inhibits TLE4-binding. In terms of tissue distribution, expressed at low levels in most tissues with highest levels in the kidney, oocytes, ovary and testis.

The protein localises to the membrane. In terms of biological role, cell surface transmembrane ligand for Eph receptors, a family of receptor tyrosine kinases which are crucial for migration, repulsion and adhesion during neuronal, vascular and epithelial development. Binds promiscuously Eph receptors residing on adjacent cells, leading to contact-dependent bidirectional signaling into neighboring cells. The signaling pathway downstream of the receptor is referred to as forward signaling while the signaling pathway downstream of the ephrin ligand is referred to as reverse signaling. May have a role in the developing mesenchymal and nervous tissue. The polypeptide is Ephrin-B1 (efnb1) (Xenopus laevis (African clawed frog)).